Consider the following 673-residue polypeptide: DNA ligase (673 aa).

Residues 36 to 40 (DAEYD), 85 to 86 (SL), and Glu116 each bind NAD(+). The active-site N6-AMP-lysine intermediate is Lys118. The NAD(+) site is built by Arg139, Glu176, Lys291, and Lys315. The Zn(2+) site is built by Cys409, Cys412, Cys427, and Cys433. The 82-residue stretch at 592-673 (RGEQPLAGRT…LQALLQEHGR (82 aa)) folds into the BRCT domain.

It belongs to the NAD-dependent DNA ligase family. LigA subfamily. Requires Mg(2+) as cofactor. Mn(2+) serves as cofactor.

It carries out the reaction NAD(+) + (deoxyribonucleotide)n-3'-hydroxyl + 5'-phospho-(deoxyribonucleotide)m = (deoxyribonucleotide)n+m + AMP + beta-nicotinamide D-nucleotide.. DNA ligase that catalyzes the formation of phosphodiester linkages between 5'-phosphoryl and 3'-hydroxyl groups in double-stranded DNA using NAD as a coenzyme and as the energy source for the reaction. It is essential for DNA replication and repair of damaged DNA. The protein is DNA ligase of Alkalilimnicola ehrlichii (strain ATCC BAA-1101 / DSM 17681 / MLHE-1).